Reading from the N-terminus, the 152-residue chain is MRKVKPARKLGRTAAHRKATLSNLSTQLLVYKRIETTEAKAKETRRVVEKIITKARKGTVHAQREIFKDIRDKQAIRILFEEIVAKVGTRQGGYTRVIKLAPRFGDAAKMAVIELVDYQEAPSASQKTGKQDRAKRVKGSKKTAEAAVSVAG.

The segment at 121–140 (APSASQKTGKQDRAKRVKGS) is disordered.

Belongs to the bacterial ribosomal protein bL17 family. Part of the 50S ribosomal subunit. Contacts protein L32.

This is Large ribosomal subunit protein bL17 from Pelodictyon phaeoclathratiforme (strain DSM 5477 / BU-1).